The sequence spans 417 residues: Phosphoglycerate kinase 1 (417 aa).

Positions 23, 24, 25, 26, 38, 39, 62, 63, 65, 66, 121, 122, 168, and 169 each coordinate (2R)-3-phosphoglycerate. An ADP-binding site is contributed by Gly212. Residue Gly212 coordinates CDP. Ala213 and Lys214 together coordinate AMP. Position 213 (Ala213) interacts with ATP. Mg(2+) is bound at residue Ala213. Asp217 is a CDP binding site. Residue Asp217 participates in Mg(2+) binding. Residue Lys218 participates in AMP binding. Lys218 is an ATP binding site. Gly236 contacts ADP. Residue Gly236 coordinates CDP. The AMP site is built by Gly237 and Gly311. Residues Gly237 and Gly311 each coordinate ATP. Residues Gly336 and Phe341 each contribute to the CDP site. Phe341 serves as a coordination point for ADP. Glu342 contributes to the AMP binding site. ATP contacts are provided by Glu342, Asp374, and Thr375. A Mg(2+)-binding site is contributed by Asp374.

It belongs to the phosphoglycerate kinase family. Monomer. Requires Mg(2+) as cofactor.

The protein resides in the cytoplasm. Its subcellular location is the mitochondrion. The catalysed reaction is (2R)-3-phosphoglycerate + ATP = (2R)-3-phospho-glyceroyl phosphate + ADP. It functions in the pathway carbohydrate degradation; glycolysis; pyruvate from D-glyceraldehyde 3-phosphate: step 2/5. Functionally, catalyzes one of the two ATP producing reactions in the glycolytic pathway via the reversible conversion of 1,3-diphosphoglycerate to 3-phosphoglycerate. Both L- and D- forms of purine and pyrimidine nucleotides can be used as substrates, but the activity is much lower on pyrimidines. Negatively regulates the biosynthesis of acetyl-CoA from pyruvate in the mitochondrion. The chain is Phosphoglycerate kinase 1 (PGK1) from Rhizopus niveus.